The sequence spans 177 residues: Large ribosomal subunit protein uL6 (177 aa).

This sequence belongs to the universal ribosomal protein uL6 family. Part of the 50S ribosomal subunit.

In terms of biological role, this protein binds to the 23S rRNA, and is important in its secondary structure. It is located near the subunit interface in the base of the L7/L12 stalk, and near the tRNA binding site of the peptidyltransferase center. The chain is Large ribosomal subunit protein uL6 from Rickettsia prowazekii (strain Madrid E).